The following is a 238-amino-acid chain: Ureidoacrylate amidohydrolase RutB (238 aa).

Asp-35 (proton acceptor) is an active-site residue. Residue Lys-144 is part of the active site. Cys-177 (nucleophile) is an active-site residue.

It belongs to the isochorismatase family. RutB subfamily.

The catalysed reaction is (Z)-3-ureidoacrylate + H2O + H(+) = (Z)-3-aminoacrylate + NH4(+) + CO2. It catalyses the reaction (Z)-3-ureidoacrylate + H2O = (Z)-3-aminoacrylate + carbamate + H(+). The enzyme catalyses (Z)-2-methylureidoacrylate + H2O + H(+) = (Z)-2-methylaminoacrylate + NH4(+) + CO2. Functionally, hydrolyzes ureidoacrylate to form aminoacrylate and carbamate. The carbamate hydrolyzes spontaneously, thereby releasing one of the nitrogen atoms of the pyrimidine ring as ammonia and one of its carbon atoms as CO2. The protein is Ureidoacrylate amidohydrolase RutB of Caulobacter vibrioides (strain NA1000 / CB15N) (Caulobacter crescentus).